The chain runs to 355 residues: UPF0421 protein BCE_2776 (355 aa).

Transmembrane regions (helical) follow at residues 19-39 (IAVFLTVLVCEFFNIPTIFAV), 74-94 (FTFFLGHQALSYALAAMFTIV), 109-129 (TLTAVAMIPITADHYFTAFLI), and 131-151 (LATTSTGIIVSTLVNFFILPP).

It belongs to the UPF0421 family.

It is found in the cell membrane. The chain is UPF0421 protein BCE_2776 from Bacillus cereus (strain ATCC 10987 / NRS 248).